A 254-amino-acid polypeptide reads, in one-letter code: UPF0246 protein BDI_1226 (254 aa).

The protein belongs to the UPF0246 family.

This chain is UPF0246 protein BDI_1226, found in Parabacteroides distasonis (strain ATCC 8503 / DSM 20701 / CIP 104284 / JCM 5825 / NCTC 11152).